A 228-amino-acid polypeptide reads, in one-letter code: 2,3-bisphosphoglycerate-dependent phosphoglycerate mutase (228 aa).

Substrate is bound by residues 7-14 (RHGESAWN), 20-21 (TG), arginine 59, 86-89 (ERHY), lysine 97, 113-114 (RR), and 182-183 (GN). Histidine 8 serves as the catalytic Tele-phosphohistidine intermediate. Glutamate 86 acts as the Proton donor/acceptor in catalysis.

It belongs to the phosphoglycerate mutase family. BPG-dependent PGAM subfamily.

The catalysed reaction is (2R)-2-phosphoglycerate = (2R)-3-phosphoglycerate. The protein operates within carbohydrate degradation; glycolysis; pyruvate from D-glyceraldehyde 3-phosphate: step 3/5. Functionally, catalyzes the interconversion of 2-phosphoglycerate and 3-phosphoglycerate. In Fusobacterium nucleatum subsp. nucleatum (strain ATCC 25586 / DSM 15643 / BCRC 10681 / CIP 101130 / JCM 8532 / KCTC 2640 / LMG 13131 / VPI 4355), this protein is 2,3-bisphosphoglycerate-dependent phosphoglycerate mutase.